A 468-amino-acid chain; its full sequence is Dihydrolipoyl dehydrogenase (468 aa).

Residues 39–47 (EKGNLGGVC), lysine 56, and alanine 119 each bind FAD. Residues cysteine 47 and cysteine 52 are joined by a disulfide bond. NAD(+)-binding positions include 183–187 (GGGYI), glutamate 206, and 271–274 (TVGR). Aspartate 314 and alanine 322 together coordinate FAD. Histidine 446 acts as the Proton acceptor in catalysis.

It belongs to the class-I pyridine nucleotide-disulfide oxidoreductase family. Homodimer. FAD serves as cofactor.

The protein localises to the cytoplasm. It localises to the membrane. It carries out the reaction N(6)-[(R)-dihydrolipoyl]-L-lysyl-[protein] + NAD(+) = N(6)-[(R)-lipoyl]-L-lysyl-[protein] + NADH + H(+). Its function is as follows. Lipoamide dehydrogenase is a component of the alpha-ketoacid dehydrogenase complexes. This Staphylococcus aureus (strain COL) protein is Dihydrolipoyl dehydrogenase (pdhD).